The chain runs to 189 residues: Potassium-transporting ATPase KdpC subunit (189 aa).

A helical transmembrane segment spans residues 10–30 (ITLVFCVFFSVFYILILWLFA).

Belongs to the KdpC family. The system is composed of three essential subunits: KdpA, KdpB and KdpC.

It localises to the cell inner membrane. Its function is as follows. Part of the high-affinity ATP-driven potassium transport (or Kdp) system, which catalyzes the hydrolysis of ATP coupled with the electrogenic transport of potassium into the cytoplasm. This subunit acts as a catalytic chaperone that increases the ATP-binding affinity of the ATP-hydrolyzing subunit KdpB by the formation of a transient KdpB/KdpC/ATP ternary complex. This is Potassium-transporting ATPase KdpC subunit from Bacteroides thetaiotaomicron (strain ATCC 29148 / DSM 2079 / JCM 5827 / CCUG 10774 / NCTC 10582 / VPI-5482 / E50).